The following is a 203-amino-acid chain: Ribosome maturation factor RimP (203 aa).

The interval 183 to 203 (FDDIETEGSAEGTTGSEEENK) is disordered.

It belongs to the RimP family.

The protein resides in the cytoplasm. Its function is as follows. Required for maturation of 30S ribosomal subunits. The polypeptide is Ribosome maturation factor RimP (Ruegeria sp. (strain TM1040) (Silicibacter sp.)).